The following is a 227-amino-acid chain: Ubiquitin domain-containing protein 1 (227 aa).

Positions Met-1–Lys-35 are disordered. The segment covering Gly-24–Lys-35 has biased composition (basic and acidic residues). In terms of domain architecture, Ubiquitin-like spans Phe-149–Pro-224.

Interacts with UBTD1.

May be involved in the regulation of cellular senescence through a positive feedback loop with TP53. Is a TP53 downstream target gene that increases the stability of TP53 protein by promoting the ubiquitination and degradation of MDM2. In Rattus norvegicus (Rat), this protein is Ubiquitin domain-containing protein 1 (Ubtd1).